Reading from the N-terminus, the 165-residue chain is SsrA-binding protein (165 aa).

The protein belongs to the SmpB family.

The protein localises to the cytoplasm. Functionally, required for rescue of stalled ribosomes mediated by trans-translation. Binds to transfer-messenger RNA (tmRNA), required for stable association of tmRNA with ribosomes. tmRNA and SmpB together mimic tRNA shape, replacing the anticodon stem-loop with SmpB. tmRNA is encoded by the ssrA gene; the 2 termini fold to resemble tRNA(Ala) and it encodes a 'tag peptide', a short internal open reading frame. During trans-translation Ala-aminoacylated tmRNA acts like a tRNA, entering the A-site of stalled ribosomes, displacing the stalled mRNA. The ribosome then switches to translate the ORF on the tmRNA; the nascent peptide is terminated with the 'tag peptide' encoded by the tmRNA and targeted for degradation. The ribosome is freed to recommence translation, which seems to be the essential function of trans-translation. This chain is SsrA-binding protein, found in Ruthia magnifica subsp. Calyptogena magnifica.